The sequence spans 305 residues: Membrane glycoprotein UL142 (305 aa).

Residues 1-19 (MRIEWACWLFGYFVSSVGS) form the signal peptide. Over 20–270 (ERSLSYRYHL…QKTNNTTSPW (251 aa)) the chain is Lumenal. The chain crosses the membrane as a helical span at residues 271–288 (VYAIPMGATATIGAGLYI). Residues 289 to 305 (GKHFTPVKFVYEVWRGQ) lie on the Cytoplasmic side of the membrane.

Interacts with host MICA and ULBP3.

The protein resides in the host endoplasmic reticulum membrane. Its subcellular location is the host Golgi apparatus membrane. Functionally, participates in the inhibition of the host immune response. Prevents host NK cell-mediated lysis of the infected cell by preventing the KLRK1 ligand 3/ULBP3 trafficking to the cell surface. Also retains another KLRK1 ligand, MHC class I-related chain A/MICA, in the Golgi apparatus to avoid its surface expression. This chain is Membrane glycoprotein UL142 (UL142), found in Homo sapiens (Human).